The chain runs to 131 residues: Conotoxin Cal8.2 (131 aa).

The signal sequence occupies residues 1 to 19 (MKLLLTLLLGSALMCITLA). Residues 20–38 (DECGLGTHRPVKEVIDNVR) constitute a propeptide that is removed on maturation.

In terms of processing, contains 4 disulfide bonds. In terms of tissue distribution, expressed by the venom duct.

The protein resides in the secreted. Functionally, probable neurotoxin with unknown target. Possibly targets ion channels. This is Conotoxin Cal8.2 from Californiconus californicus (California cone).